Reading from the N-terminus, the 720-residue chain is Polyribonucleotide nucleotidyltransferase (720 aa).

2 residues coordinate Mg(2+): D484 and D490. Positions P551–I610 constitute a KH domain. The 69-residue stretch at G620–R688 folds into the S1 motif domain. Residues P697–S720 form a disordered region.

It belongs to the polyribonucleotide nucleotidyltransferase family. The cofactor is Mg(2+).

It is found in the cytoplasm. The enzyme catalyses RNA(n+1) + phosphate = RNA(n) + a ribonucleoside 5'-diphosphate. Its function is as follows. Involved in mRNA degradation. Catalyzes the phosphorolysis of single-stranded polyribonucleotides processively in the 3'- to 5'-direction. The polypeptide is Polyribonucleotide nucleotidyltransferase (Dehalococcoides mccartyi (strain ATCC BAA-2266 / KCTC 15142 / 195) (Dehalococcoides ethenogenes (strain 195))).